Consider the following 108-residue polypeptide: UPF0102 protein Sfri_0388 (108 aa).

Belongs to the UPF0102 family.

This Shewanella frigidimarina (strain NCIMB 400) protein is UPF0102 protein Sfri_0388.